The primary structure comprises 189 residues: Leucine repeat adapter protein 25 (189 aa).

A Phosphoserine modification is found at Ser28. Positions 54-83 (ELSRAARAPDGPRHAAGAANAGPAAGPRRP) are disordered. A compositionally biased stretch (low complexity) spans 67-83 (HAAGAANAGPAAGPRRP). The LRR repeat unit spans residues 86–114 (LDSALAALRKEMVGLRQLDMSLLCQLWGL). The disordered stretch occupies residues 141–175 (DSSYPPDAGLSDDEEPPDASLPPDPPPLTVPQTHN). A compositionally biased stretch (pro residues) spans 159 to 169 (ASLPPDPPPLT). Residue Ser188 is modified to Phosphoserine.

Belongs to the FAM89 family. Interacts with SKI. Interacts (via LRR repeat) with CDC42BPA (via AGC-kinase C-terminal domain), CDC42BPB (via AGC-kinase C-terminal domain) and LIMK1 (via LIM zinc-binding domains). Forms a tripartite complex with CDC42BPA, CDC42BPB and LIMK1.

The protein resides in the cytoplasm. It localises to the cell projection. Its subcellular location is the lamellipodium. Negatively regulates TGF-beta-induced signaling; in cooperation with SKI prevents the translocation of SMAD2 from the nucleus to the cytoplasm in response to TGF-beta. Acts as an adapter that mediates the specific recognition of LIMK1 by CDC42BPA and CDC42BPB in the lamellipodia. LRAP25-mediated CDC42BPA/CDC42BPB targeting to LIMK1 and the lamellipodium results in LIMK1 activation and the subsequent phosphorylation of CFL1 which is important for lamellipodial F-actin regulation. This Homo sapiens (Human) protein is Leucine repeat adapter protein 25 (FAM89B).